A 189-amino-acid polypeptide reads, in one-letter code: Xanthine phosphoribosyltransferase (189 aa).

Xanthine contacts are provided by leucine 20 and asparagine 27. Residue 128 to 132 (ANGKA) coordinates 5-phospho-alpha-D-ribose 1-diphosphate. Lysine 156 serves as a coordination point for xanthine.

The protein belongs to the purine/pyrimidine phosphoribosyltransferase family. Xpt subfamily. In terms of assembly, homodimer.

It is found in the cytoplasm. It catalyses the reaction XMP + diphosphate = xanthine + 5-phospho-alpha-D-ribose 1-diphosphate. Its pathway is purine metabolism; XMP biosynthesis via salvage pathway; XMP from xanthine: step 1/1. Functionally, converts the preformed base xanthine, a product of nucleic acid breakdown, to xanthosine 5'-monophosphate (XMP), so it can be reused for RNA or DNA synthesis. This is Xanthine phosphoribosyltransferase from Pseudomonas syringae pv. syringae (strain B728a).